The following is a 157-amino-acid chain: WPP domain-containing protein 3 (157 aa).

Residues Met-1–Glu-20 are compositionally biased toward polar residues. The interval Met-1–Thr-41 is disordered. Residues His-32 to Thr-41 are compositionally biased toward basic and acidic residues. The interval Thr-37 to Ala-138 is WPP; degenerate.

As to expression, expressed in roots, stems and leaves.

Its subcellular location is the cytoplasm. The protein localises to the nucleus. Its function is as follows. Regulates the mitotic activity in roots. The protein is WPP domain-containing protein 3 (WPP3) of Arabidopsis thaliana (Mouse-ear cress).